A 242-amino-acid chain; its full sequence is Ethanolamine ammonia-lyase small subunit (242 aa).

Residues Val-155 and Glu-176 each coordinate adenosylcob(III)alamin.

This sequence belongs to the EutC family. The basic unit is a heterodimer which dimerizes to form tetramers. The heterotetramers trimerize; 6 large subunits form a core ring with 6 small subunits projecting outwards. Adenosylcob(III)alamin is required as a cofactor.

It localises to the bacterial microcompartment. The catalysed reaction is ethanolamine = acetaldehyde + NH4(+). It functions in the pathway amine and polyamine degradation; ethanolamine degradation. Functionally, catalyzes the deamination of various vicinal amino-alcohols to oxo compounds. Allows this organism to utilize ethanolamine as the sole source of nitrogen and carbon in the presence of external vitamin B12. The chain is Ethanolamine ammonia-lyase small subunit from Clostridium acetobutylicum (strain ATCC 824 / DSM 792 / JCM 1419 / IAM 19013 / LMG 5710 / NBRC 13948 / NRRL B-527 / VKM B-1787 / 2291 / W).